We begin with the raw amino-acid sequence, 208 residues long: T-cell surface glycoprotein CD8 beta chain (208 aa).

An N-terminal signal peptide occupies residues 1–21 (MQPWLWLVFSVKLSALWGSSA). The 110-residue stretch at 22 to 131 (LLQTPSSLLV…MVVFGTGTKL (110 aa)) folds into the Ig-like V-type domain. The Extracellular portion of the chain corresponds to 22 to 168 (LLQTPSSLLV…KTQKGLTCGL (147 aa)). 3 N-linked (GlcNAc...) asparagine glycosylation sites follow: Asn34, Asn88, and Asn94. The cysteines at positions 41 and 115 are disulfide-linked. A helical membrane pass occupies residues 169–189 (ITLSLLVACILVLLVSLSVAI). At 190–208 (HFHCMRRRARIHFMKQFHK) the chain is on the cytoplasmic side.

As to quaternary structure, forms disulfide-linked heterodimers with CD8A at the cell surface. Interacts with CD3D; this interaction couples TCR-CD3 with CD8. Interacts with LCK. In terms of processing, phosphorylated as a consequence of T-cell activation. Post-translationally, palmitoylated at the cytoplasmic tail and thereby targets the heterodimer CD8A/CD8B to lipid rafts unlike CD8A homodimers.

It is found in the cell membrane. Its function is as follows. Integral membrane glycoprotein that plays an essential role in the immune response and serves multiple functions in responses against both external and internal offenses. In T-cells, functions primarily as a coreceptor for MHC class I molecule:peptide complex. The antigens presented by class I peptides are derived from cytosolic proteins while class II derived from extracellular proteins. Interacts simultaneously with the T-cell receptor (TCR) and the MHC class I proteins presented by antigen presenting cells (APCs). In turn, recruits the Src kinase LCK to the vicinity of the TCR-CD3 complex. A palmitoylation site in the cytoplasmic tail of CD8B chain contributes to partitioning of CD8 into the plasma membrane lipid rafts where signaling proteins are enriched. Once LCK recruited, it initiates different intracellular signaling pathways by phosphorylating various substrates ultimately leading to lymphokine production, motility, adhesion and activation of cytotoxic T-lymphocytes (CTLs). Additionally, plays a critical role in thymic selection of CD8+ T-cells. The sequence is that of T-cell surface glycoprotein CD8 beta chain (Cd8b) from Rattus norvegicus (Rat).